Consider the following 300-residue polypeptide: Probable endonuclease 4 (300 aa).

Positions 69, 110, 145, 179, 182, 214, 227, 229, and 259 each coordinate Zn(2+).

The protein belongs to the AP endonuclease 2 family. Requires Zn(2+) as cofactor.

It carries out the reaction Endonucleolytic cleavage to 5'-phosphooligonucleotide end-products.. Functionally, endonuclease IV plays a role in DNA repair. It cleaves phosphodiester bonds at apurinic or apyrimidinic (AP) sites, generating a 3'-hydroxyl group and a 5'-terminal sugar phosphate. In Lachnoclostridium phytofermentans (strain ATCC 700394 / DSM 18823 / ISDg) (Clostridium phytofermentans), this protein is Probable endonuclease 4.